A 162-amino-acid chain; its full sequence is MKFQLWVSTGILLVSLLPCHECRAFIKSPASSPGALLPALSNSQPFLLRMGEEYFLRLGNLHKHSPGSFPEASAGNFVRAVQQLQAQQWSSQPGMRAASLDGADSPYSAQEDPTEKAKRAEEPPISLDLTFHLLREVLEMARAEQIAQQAHSNRKLMDIIGK.

A signal peptide spans Met1–Ala24. The propeptide occupies Phe25 to Arg119. The segment at Ser91 to Glu122 is disordered. A compositionally biased stretch (basic and acidic residues) spans Pro113–Glu122. Ile160 carries the isoleucine amide modification.

The protein belongs to the sauvagine/corticotropin-releasing factor/urotensin I family.

The protein resides in the secreted. Functionally, this hormone from hypothalamus regulates the release of corticotropin from pituitary gland. The protein is Corticoliberin (crh) of Xenopus laevis (African clawed frog).